The following is a 669-amino-acid chain: Zinc finger MYM-type protein 5 (669 aa).

Residues lysine 88, lysine 91, lysine 134, lysine 149, lysine 166, and lysine 225 each participate in a glycyl lysine isopeptide (Lys-Gly) (interchain with G-Cter in SUMO2) cross-link. 4 consecutive MYM-type zinc fingers follow at residues 265-299, 311-351, 358-393, and 404-431; these read HLFC…KKAN, QEFY…RHEV, HKLC…KSTG, and KRFC…ASEN. Residues lysine 443, lysine 455, lysine 462, and lysine 552 each participate in a glycyl lysine isopeptide (Lys-Gly) (interchain with G-Cter in SUMO2) cross-link.

In terms of assembly, interacts (via N-terminal 120 amino acid region) with ETV5 (via C-terminal).

It localises to the nucleus. Its function is as follows. Functions as a transcriptional regulator. In Homo sapiens (Human), this protein is Zinc finger MYM-type protein 5 (ZMYM5).